Consider the following 460-residue polypeptide: Methionine aminopeptidase 2-1 (460 aa).

Positions 1–90 (MGSKSPNGED…SAQAAQQTAP (90 aa)) are disordered. Over residues 30-39 (SAAASGLLRG) the composition is skewed to low complexity. Acidic residues predominate over residues 42–52 (EDQDEDGDDDE). A compositionally biased stretch (basic residues) spans 69-81 (TKKRRRNNKKKKS). His212 provides a ligand contact to substrate. The a divalent metal cation site is built by Asp233, Asp244, and His313. His321 lines the substrate pocket. A divalent metal cation contacts are provided by Glu346 and Glu441.

It belongs to the peptidase M24A family. Methionine aminopeptidase eukaryotic type 2 subfamily. Requires Co(2+) as cofactor. The cofactor is Zn(2+). Mn(2+) is required as a cofactor. It depends on Fe(2+) as a cofactor.

It localises to the cytoplasm. The enzyme catalyses Release of N-terminal amino acids, preferentially methionine, from peptides and arylamides.. Its function is as follows. Cotranslationally removes the N-terminal methionine from nascent proteins. The N-terminal methionine is often cleaved when the second residue in the primary sequence is small and uncharged (Met-Ala-, Cys, Gly, Pro, Ser, Thr, or Val). The sequence is that of Methionine aminopeptidase 2-1 from Leptosphaeria maculans (strain JN3 / isolate v23.1.3 / race Av1-4-5-6-7-8) (Blackleg fungus).